The chain runs to 57 residues: UPF0391 membrane protein Nham_2738 (57 aa).

Transmembrane regions (helical) follow at residues 4 to 24 and 30 to 50; these read WVVTFLIIALIAGILGFGGLA and IAKIIFFIAVILFVVSAVVGL.

It belongs to the UPF0391 family.

It localises to the cell membrane. The protein is UPF0391 membrane protein Nham_2738 of Nitrobacter hamburgensis (strain DSM 10229 / NCIMB 13809 / X14).